The following is a 66-amino-acid chain: Large ribosomal subunit protein bL35 (66 aa).

Belongs to the bacterial ribosomal protein bL35 family.

The sequence is that of Large ribosomal subunit protein bL35 from Ruegeria pomeroyi (strain ATCC 700808 / DSM 15171 / DSS-3) (Silicibacter pomeroyi).